The following is a 64-amino-acid chain: Bacteriocin plantaricin ASM1 (64 aa).

The N-terminal stretch at 1–21 (MSKLVKTLTVDEISKIQTNGG) is a signal peptide. A cross-link (lanthionine (Ser-Cys)) is located at residues 61–64 (SYHC).

Post-translationally, contains 2 disulfide bonds.

The protein resides in the secreted. Its function is as follows. Bacteriocin with a narrow antibacterial spectrum. Antibacterial activity against the Gram-positive bacteria L.plantarun, L.pentosus, L.curvatus, L.lindneri, L.mesenteroides and E.faecilis. Lacks antibacterial activity against the Gram-positive bacteria L.brevis, L.sakei, L.lactis, P.acidilactici, B.subtilis, B.cereus, L.monocytogenes and S.aureus, and against the Gram-negative bacteria E.coli and S.typhimurium. In Lactiplantibacillus plantarum (Lactobacillus plantarum), this protein is Bacteriocin plantaricin ASM1.